The sequence spans 214 residues: MSKVSSAVLRQGVATILKEKKERKFVETVELQIALKNYDPDKDKRFAGSVKLPNITKANYKVCVLGDAQACEAAQKENIPFMDVDALKALNKDKKLVKKLARKYNAFLASDSVLRQLQKILGPGLNKAGKFPTLLGKNEDLKVKINELQCQVKFQLKKVLCMGVAVGNVKLTEDQLVANIERSISFLVSLLKKGWQNIKCLYIKSSMGAPIKIY.

Belongs to the universal ribosomal protein uL1 family. In terms of assembly, component of the large ribosomal subunit.

The protein localises to the cytoplasm. In terms of biological role, component of the large ribosomal subunit. The ribosome is a large ribonucleoprotein complex responsible for the synthesis of proteins in the cell. The sequence is that of Large ribosomal subunit protein uL1 (RPL10A) from Entamoeba histolytica (strain ATCC 30459 / HM-1:IMSS / ABRM).